The following is a 786-amino-acid chain: Endonuclease MutS2 (786 aa).

An ATP-binding site is contributed by 332–339 (GPNTGGKT). In terms of domain architecture, Smr spans 711-786 (VDLRGMDSIE…GTGVTIVELK (76 aa)).

It belongs to the DNA mismatch repair MutS family. MutS2 subfamily. As to quaternary structure, homodimer. Binds to stalled ribosomes, contacting rRNA.

Endonuclease that is involved in the suppression of homologous recombination and thus may have a key role in the control of bacterial genetic diversity. Its function is as follows. Acts as a ribosome collision sensor, splitting the ribosome into its 2 subunits. Detects stalled/collided 70S ribosomes which it binds and splits by an ATP-hydrolysis driven conformational change. Acts upstream of the ribosome quality control system (RQC), a ribosome-associated complex that mediates the extraction of incompletely synthesized nascent chains from stalled ribosomes and their subsequent degradation. Probably generates substrates for RQC. This chain is Endonuclease MutS2, found in Clostridium kluyveri (strain NBRC 12016).